We begin with the raw amino-acid sequence, 775 residues long: Isopimaradiene synthase (775 aa).

The N-terminal 36 residues, 1–36 (MFSSSLKLKTNPLMDNKIHRSSSDRDFRGSTISSVK), are a transit peptide targeting the chloroplast. Mg(2+)-binding residues include D525, D529, N669, Q672, and E677. The short motif at 525-529 (DDFFD) is the DDXXD motif element.

The protein belongs to the terpene synthase family. Mg(2+) is required as a cofactor. As to expression, ubiquitous expression in roots, stems, leaves and flowers.

The protein localises to the plastid. Its subcellular location is the chloroplast. It carries out the reaction (+)-copalyl diphosphate = isopimara-8(14),15-diene + diphosphate. Its pathway is secondary metabolite biosynthesis; terpenoid biosynthesis. In terms of biological role, involved in the biosynthesis of ent-kaurene diterpenoids natural products such as oridonin, miltiradiene, eriocalyxin B and nezukol, known to exhibit antitumor, anti-inflammatory and antibacterial activities. Catalyzes the conversion of (+)-copalyl diphosphate ((+)-CPP) to isopimaradiene. The protein is Isopimaradiene synthase of Isodon rubescens (Rabdosia rubescens).